The sequence spans 188 residues: Elongation factor P-like protein (188 aa).

Belongs to the elongation factor P family.

This Xanthomonas oryzae pv. oryzae (strain MAFF 311018) protein is Elongation factor P-like protein.